The primary structure comprises 85 residues: Large ribosomal subunit protein bL27 (85 aa).

Positions 1–20 (MAHKKGGGTTRNGRDSESKR) are disordered.

It belongs to the bacterial ribosomal protein bL27 family.

The chain is Large ribosomal subunit protein bL27 from Herminiimonas arsenicoxydans.